A 227-amino-acid polypeptide reads, in one-letter code: PKHD-type hydroxylase Bcep18194_B0892 (227 aa).

Residues 78–178 (KVFPPLFNRY…RVASFFWIQS (101 aa)) form the Fe2OG dioxygenase domain. Fe cation-binding residues include H96, D98, and H159. R169 is a 2-oxoglutarate binding site.

Fe(2+) is required as a cofactor. Requires L-ascorbate as cofactor.

In Burkholderia lata (strain ATCC 17760 / DSM 23089 / LMG 22485 / NCIMB 9086 / R18194 / 383), this protein is PKHD-type hydroxylase Bcep18194_B0892.